An 88-amino-acid polypeptide reads, in one-letter code: uncharacterized protein (88 aa).

The protein localises to the host cytoplasm. This is an uncharacterized protein from Escherichia phage Mu (Bacteriophage Mu).